Consider the following 120-residue polypeptide: Ig heavy chain V region AC38 15.3 (120 aa).

The v segment stretch occupies residues 1-98 (QVQLLQPGTE…EDSAVYYCAR (98 aa)). The cysteines at positions 22 and 96 are disulfide-linked. The interval 99–105 (WDYEGDR) is d segment. The interval 106–120 (YFDVWGTGTTVTVSS) is j segment.

This Mus musculus (Mouse) protein is Ig heavy chain V region AC38 15.3.